The following is a 1637-amino-acid chain: Kinesin-like protein KIF21B (1637 aa).

Positions 8–370 (CVKVAVRIRP…LKYANRARNI (363 aa)) constitute a Kinesin motor domain. 87 to 94 (GQTGAGKT) lines the ATP pocket. 2 coiled-coil regions span residues 376 to 604 (VNQD…EEEG) and 631 to 824 (NFQA…ALRR). The interaction with TRIM3 stretch occupies residues 400-1099 (MEYKAGKRVI…LQALIYNVQQ (700 aa)). A compositionally biased stretch (low complexity) spans 509-533 (ASARSPYSLGASPAAPAFGGSPASS). Disordered regions lie at residues 509-538 (ASAR…EDAS) and 552-628 (KKKE…PEEK). Positions 578 to 627 (NSEETDENEAEEEEEERDESGCEEEEGREDEDEDSGSEESLVDSDSDPEE) are enriched in acidic residues. Phosphoserine is present on serine 579. Threonine 582 carries the post-translational modification Phosphothreonine. Disordered regions lie at residues 830 to 865 (SERV…GARS) and 880 to 906 (FLGD…GASQ). Positions 846–865 (SGAEVSASTTSSEAESGARS) are enriched in low complexity. Residues 928–1016 (MQRMTIVNLE…EETKEELDST (89 aa)) are a coiled coil. Serine 1149, serine 1167, and serine 1215 each carry phosphoserine. A compositionally biased stretch (polar residues) spans 1194–1217 (RTVSLPTRGSTFPRQSRATETSPL). The interval 1194–1251 (RTVSLPTRGSTFPRQSRATETSPLTRRKSYDRGQPIRSTDVGFTPPSSPPTRPRNDRN) is disordered. At threonine 1237 the chain carries Phosphothreonine. Position 1241 is a phosphoserine (serine 1241). WD repeat units follow at residues 1306–1343 (GHTK…EIAA), 1346–1384 (GHPN…KCIR), 1410–1448 (QGEH…PVGK), 1451–1493 (GHIG…TGTI), 1502–1539 (PHYD…LIQQ), 1543–1582 (AHKD…PIGE), and 1585–1622 (GHDS…TPCL).

This sequence belongs to the TRAFAC class myosin-kinesin ATPase superfamily. Kinesin family. As to quaternary structure, interacts with TRIM3; the interaction positively affects motility of KIF21B. Interacts with GABARAP and GABA(A) receptor subunits: GABRG2, GABRA1 and GABRA2. May interact with GABA(A) receptor subunits: GABRB2 and GABRB3.

It localises to the cytoplasm. The protein localises to the cytoskeleton. Its subcellular location is the cell projection. It is found in the dendrite. The protein resides in the growth cone. It localises to the axon. The protein localises to the cytoplasmic vesicle. Functionally, plus-end directed microtubule-dependent motor protein which displays processive activity. Is involved in regulation of microtubule dynamics, synapse function and neuronal morphology, including dendritic tree branching and spine formation. Plays a role in lerning and memory. Involved in delivery of gamma-aminobutyric acid (GABA(A)) receptor to cell surface. The protein is Kinesin-like protein KIF21B (KIF21B) of Homo sapiens (Human).